Consider the following 100-residue polypeptide: Large ribosomal subunit protein uL23 (100 aa).

It belongs to the universal ribosomal protein uL23 family. As to quaternary structure, part of the 50S ribosomal subunit. Contacts protein L29, and trigger factor when it is bound to the ribosome.

One of the early assembly proteins it binds 23S rRNA. One of the proteins that surrounds the polypeptide exit tunnel on the outside of the ribosome. Forms the main docking site for trigger factor binding to the ribosome. The polypeptide is Large ribosomal subunit protein uL23 (Lacticaseibacillus casei (strain BL23) (Lactobacillus casei)).